Here is a 316-residue protein sequence, read N- to C-terminus: HTH-type transcriptional regulator cbl (316 aa).

In terms of domain architecture, HTH lysR-type spans 1-59; the sequence is MNFQQLKIIREAARQDYNLTEVANMLFTSQSGVSRHIRELEDELGIEIFVRRGKRLLGM. Positions 19–38 form a DNA-binding region, H-T-H motif; that stretch reads LTEVANMLFTSQSGVSRHIR.

Belongs to the LysR transcriptional regulatory family.

In terms of biological role, may be an accessory regulatory protein within the cys regulon. The protein is HTH-type transcriptional regulator cbl (cbl) of Escherichia coli (strain K12).